Reading from the N-terminus, the 234-residue chain is HTH-type transcriptional regulator MT1864 (234 aa).

Positions 15 to 75 constitute an HTH tetR-type domain; sequence EQIEAKIVEL…LLLVDAYSDL (61 aa). The H-T-H motif DNA-binding region spans 38-57; the sequence is SLRAIARNLGMVSSAVYRYV.

In terms of assembly, homodimer.

Its subcellular location is the cytoplasm. Its function is as follows. May participate in the regulatory network that controls the expression of MmpL lipid transporters. This chain is HTH-type transcriptional regulator MT1864, found in Mycobacterium tuberculosis (strain CDC 1551 / Oshkosh).